The sequence spans 359 residues: Fructose-bisphosphate aldolase (359 aa).

A D-glyceraldehyde 3-phosphate-binding site is contributed by S62. D109 (proton donor) is an active-site residue. Residues H110, D144, E174, and H226 each contribute to the Zn(2+) site. Residue G227 participates in dihydroxyacetone phosphate binding. H265 contributes to the Zn(2+) binding site. Dihydroxyacetone phosphate is bound by residues 266-268 (GGS) and 287-290 (NLDT).

The protein belongs to the class II fructose-bisphosphate aldolase family. Homodimer. It depends on Zn(2+) as a cofactor.

It is found in the cytoplasm. It carries out the reaction beta-D-fructose 1,6-bisphosphate = D-glyceraldehyde 3-phosphate + dihydroxyacetone phosphate. It participates in carbohydrate degradation; glycolysis; D-glyceraldehyde 3-phosphate and glycerone phosphate from D-glucose: step 4/4. Functionally, catalyzes the aldol condensation of dihydroxyacetone phosphate (DHAP or glycerone-phosphate) with glyceraldehyde 3-phosphate (G3P) to form fructose 1,6-bisphosphate (FBP) in gluconeogenesis and the reverse reaction in glycolysis. This chain is Fructose-bisphosphate aldolase (FBA1), found in Candida albicans (strain SC5314 / ATCC MYA-2876) (Yeast).